Reading from the N-terminus, the 257-residue chain is Cilia- and flagella-associated protein 300 (257 aa).

This sequence belongs to the CFAP300 family.

The protein localises to the cytoplasm. It localises to the cytoskeleton. It is found in the flagellum axoneme. Its function is as follows. Cilium- and flagellum-specific protein that plays a role in axonemal structure organization and motility. Plays a role in outer and inner dynein arm assembly. This is Cilia- and flagella-associated protein 300 from Chlamydomonas reinhardtii (Chlamydomonas smithii).